We begin with the raw amino-acid sequence, 116 residues long: Ribulose bisphosphate carboxylase small subunit 1 (116 aa).

Belongs to the RuBisCO small chain family. In terms of assembly, heterohexadecamer of 8 large and 8 small subunits.

It is found in the cytoplasm. RuBisCO catalyzes two reactions: the carboxylation of D-ribulose 1,5-bisphosphate, the primary event in carbon dioxide fixation, as well as the oxidative fragmentation of the pentose substrate. Both reactions occur simultaneously and in competition at the same active site. Although the small subunit is not catalytic it is essential for maximal activity. Its function is as follows. Can replace the endogenous type I ccbS gene in H.neapolitanus, reconstituting RuBisCO with about 10% of normal activity; the active enzyme is targeted to carboxysomes. In Hydrogenovibrio crunogenus (strain DSM 25203 / XCL-2) (Thiomicrospira crunogena), this protein is Ribulose bisphosphate carboxylase small subunit 1.